The following is a 941-amino-acid chain: Pre-mRNA-processing factor 6 (941 aa).

Positions 1-79 (MNKKKKPFLG…DEDLNDTNYD (79 aa)) are disordered. The segment covering 39–65 (DANDPVDDRHAPPGKRTVGDQMKKNQA) has biased composition (basic and acidic residues). Residues 66–78 (ADDDDEDLNDTNY) are compositionally biased toward acidic residues. Residue serine 143 is modified to Phosphoserine. Phosphothreonine is present on residues threonine 180, threonine 266, and threonine 275. A Phosphoserine modification is found at serine 279. HAT repeat units lie at residues 384 to 416 (TDIR…LEEP), 418 to 444 (DARI…ARLE), 445 to 476 (TYEN…LEEA), 554 to 586 (NALE…FEKN), 588 to 620 (GTRE…SKWL), 622 to 654 (GDVP…LESE), 689 to 721 (GNIS…IEEQ), 723 to 755 (ELME…LEEK), and 855 to 887 (RKIT…FELQ).

As to quaternary structure, identified in the spliceosome B complex. Identified in the spliceosome C complex. Associates with the U5 snRNP particle. Component of the U4/U6-U5 tri-snRNP complex composed of the U4, U6 and U5 snRNAs and at least PRPF3, PRPF4, PRPF6, PRPF8, PRPF31, SNRNP200, TXNL4A, SNRNP40, DDX23, CD2BP2, PPIH, SNU13, EFTUD2, SART1 and USP39, LSm proteins LSm2-8 and Sm proteins. Interacts with ARAF1. Interacts with AR and NR3C1, but not ESR1, independently of the presence of hormones. Interacts with USH1G. Post-translationally, phosphorylated by PRP4K during spliceosome assembly.

The protein localises to the nucleus. It is found in the nucleoplasm. The protein resides in the nucleus speckle. Functionally, involved in pre-mRNA splicing as component of the U4/U6-U5 tri-snRNP complex, one of the building blocks of the spliceosome. Enhances dihydrotestosterone-induced transactivation activity of AR, as well as dexamethasone-induced transactivation activity of NR3C1, but does not affect estrogen-induced transactivation. This is Pre-mRNA-processing factor 6 (Prpf6) from Mus musculus (Mouse).